The sequence spans 201 residues: Ras-related protein Rab-9A (201 aa).

Ala-2 is subject to N-acetylalanine. Gly-17 lines the GDP pocket. Residues Gly-17, Val-18, Gly-19, Lys-20, Ser-21, Ser-22, Thr-34, His-38, and Thr-39 each coordinate GTP. Residues Gly-19, Lys-20, Ser-21, and Ser-22 each coordinate GDP. Ser-21 contacts Mg(2+). Positions 31 to 42 (KFDTQLFHTIGV) match the Switch 1 motif. Mg(2+) contacts are provided by Thr-39 and Asp-62. Residues 64 to 78 (AGQERFRSLRTPFYR) carry the Switch 2 motif. GTP is bound by residues Gly-65, Asn-124, Lys-125, and Asp-127. 5 residues coordinate GDP: Asn-124, Lys-125, Asp-127, Ala-155, and Lys-156. Lys-156 contacts GTP. Ser-179 carries the post-translational modification Phosphoserine. At Thr-187 the chain carries Phosphothreonine. Residues Cys-200 and Cys-201 are each lipidated (S-geranylgeranyl cysteine).

It belongs to the small GTPase superfamily. Rab family. In terms of assembly, interacts (preferentially in its GTP-bound form) with GCC2 (via its GRIP domain). Interacts (GTP-bound form) with SGSM1; the GDP-bound form has much lower affinity for SGSM1. Interacts with SGSM2. The GTP-bound form but not the GDP-bound form interacts with HPS4 and the BLOC-3 complex (heterodimer of HPS1 and HPS4) but does not interact with HPS1 alone. Interacts (GTP-bound form) with NDE1; two RAB9A-GTP molecules lie on the opposite sides of the NDE1 homodimer; the interaction leads to RAB9A-dynein motor tethering. Interacts (GTP-bound form) with NDEL1. Mg(2+) serves as cofactor.

It localises to the cell membrane. The protein resides in the endoplasmic reticulum membrane. The protein localises to the golgi apparatus membrane. Its subcellular location is the late endosome. It is found in the cytoplasmic vesicle. It localises to the phagosome membrane. The protein resides in the phagosome. The protein localises to the cytoplasmic vesicle membrane. Its subcellular location is the melanosome. It carries out the reaction GTP + H2O = GDP + phosphate + H(+). Its activity is regulated as follows. Regulated by guanine nucleotide exchange factors (GEFs) which promote the exchange of bound GDP for free GTP. Regulated by GTPase activating proteins (GAPs) which increase the GTP hydrolysis activity. Inhibited by GDP dissociation inhibitors (GDIs). Its function is as follows. The small GTPases Rab are key regulators of intracellular membrane trafficking, from the formation of transport vesicles to their fusion with membranes. Rabs cycle between an inactive GDP-bound form and an active GTP-bound form that is able to recruit to membranes different sets of downstream effectors directly responsible for vesicle formation, movement, tethering and fusion. RAB9A is involved in the transport of proteins between the endosomes and the trans-Golgi network (TGN). Specifically uses NDE1/NDEL1 as an effector to interact with the dynein motor complex in order to control retrograde trafficking of RAB9-associated late endosomes to the TGN. Involved in the recruitment of SGSM2 to melanosomes and is required for the proper trafficking of melanogenic enzymes TYR, TYRP1 and DCT/TYRP2 to melanosomes in melanocytes. The polypeptide is Ras-related protein Rab-9A (RAB9A) (Canis lupus familiaris (Dog)).